Consider the following 750-residue polypeptide: Methylmalonyl-CoA mutase, mitochondrial (750 aa).

The transit peptide at 1 to 32 (MLRAKNQLFLLSPHYLRQVKESSGSRLIQQRL) directs the protein to the mitochondrion. Gln50 contributes to the malonyl-CoA binding site. Lys89 carries the N6-acetyllysine modification. Residues 96-99 (YPTM) and 106-110 (TIRQY) each bind malonyl-CoA. Lys212 is subject to N6-acetyllysine. Malonyl-CoA contacts are provided by residues 216 to 218 (TIQ), Arg228, Lys255, His265, and 304 to 306 (RLS). Residue Lys335 is modified to N6-acetyllysine. An N6-succinyllysine modification is found at Lys343. Ser481 is subject to Phosphoserine. Lys595 carries the post-translational modification N6-succinyllysine. At Lys602 the chain carries N6-acetyllysine. The B12-binding domain occupies 614-746 (RPRLLVAKMG…DDIEKCLEKK (133 aa)). Residue His627 coordinates adenosylcob(III)alamin.

The protein belongs to the methylmalonyl-CoA mutase family. As to quaternary structure, homodimer. Interacts (the apoenzyme form) with MMAA; the interaction is GTP dependent. Adenosylcob(III)alamin is required as a cofactor.

The protein localises to the mitochondrion matrix. The protein resides in the mitochondrion. It localises to the cytoplasm. The catalysed reaction is (R)-methylmalonyl-CoA = succinyl-CoA. Its activity is regulated as follows. Inhibited by itaconyl-CoA, a metabolite that inactivates the coenzyme B12 cofactor. Catalyzes the reversible isomerization of methylmalonyl-CoA (MMCoA) (generated from branched-chain amino acid metabolism and degradation of dietary odd chain fatty acids and cholesterol) to succinyl-CoA (3-carboxypropionyl-CoA), a key intermediate of the tricarboxylic acid cycle. This is Methylmalonyl-CoA mutase, mitochondrial (MMUT) from Bos taurus (Bovine).